Here is a 555-residue protein sequence, read N- to C-terminus: Polypyrimidine tract-binding protein 1 (555 aa).

M1 bears the N-acetylmethionine mark. Position 16 is a phosphoserine (S16). RRM domains are found at residues 58 to 142 (RVIH…SSPN), 183 to 259 (LRII…FSKL), and 361 to 412 (SVLL…SQAQ). K64 is covalently cross-linked (Glycyl lysine isopeptide (Lys-Gly) (interchain with G-Cter in SUMO2)). At Y126 the chain carries Phosphotyrosine. At T137 the chain carries Phosphothreonine. At S140 the chain carries Phosphoserine. K217 participates in a covalent cross-link: Glycyl lysine isopeptide (Lys-Gly) (interchain with G-Cter in SUMO2). Positions 435–457 (HQSVQLPREGQEDQGLTKDYGSS) are disordered. At S457 the chain carries Phosphoserine. The RRM 4 domain maps to 478–553 (ATLHLSNIPP…HHLRVSFSKS (76 aa)).

Monomer. Part of a ternary complex containing KHSRP, PTBP1, PTBP2 and HNRPH1. Interacts with SFPQ. Interacts with RAVER1. Interacts with IVNS1ABP (via BACK domain); the interaction is direct. In terms of tissue distribution, expressed in myoblast; expression gradually decreases during muscle cell differentiation (at protein level).

It localises to the nucleus. Functionally, plays a role in pre-mRNA splicing and in the regulation of alternative splicing events. Activates exon skipping of its own pre-mRNA during muscle cell differentiation. Binds to the polypyrimidine tract of introns. May promote RNA looping when bound to two separate polypyrimidine tracts in the same pre-mRNA. May promote the binding of U2 snRNP to pre-mRNA. Cooperates with RAVER1 to modulate switching between mutually exclusive exons during maturation of the TPM1 pre-mRNA. Represses the splicing of MAPT/Tau exon 10. Binds to polypyrimidine-rich controlling element (PCE) of CFTR and promotes exon skipping of CFTR exon 9, thereby antagonizing TIA1 and its role in exon inclusion of CFTR exon 9. Plays a role in the splicing of pyruvate kinase PKM by binding repressively to a polypyrimidine tract flanking PKM exon 9, inhibiting exon 9 inclusion and resulting in exon 10 inclusion and production of the PKM M2 isoform. The polypeptide is Polypyrimidine tract-binding protein 1 (Ptbp1) (Mus musculus (Mouse)).